Here is a 459-residue protein sequence, read N- to C-terminus: Cysteine--tRNA ligase (459 aa).

Zn(2+) is bound at residue Cys-31. Positions 33–43 (PTVYYNPHIGN) match the 'HIGH' region motif. Residues Cys-216, His-241, and Glu-245 each coordinate Zn(2+). Positions 274–278 (KMSKS) match the 'KMSKS' region motif. Lys-277 provides a ligand contact to ATP.

Belongs to the class-I aminoacyl-tRNA synthetase family. As to quaternary structure, monomer. The cofactor is Zn(2+).

Its subcellular location is the cytoplasm. The catalysed reaction is tRNA(Cys) + L-cysteine + ATP = L-cysteinyl-tRNA(Cys) + AMP + diphosphate. The sequence is that of Cysteine--tRNA ligase from Rickettsia rickettsii (strain Iowa).